The chain runs to 382 residues: Apolipoprotein A-IV (382 aa).

An N-terminal signal peptide occupies residues 1–20 (MFLKAVVLTLSLVAVTGAQA). 13 tandem repeats follow at residues 33-54 (DYFS…KSEL), 60-81 (ALFQ…KKLV), 82-103 (SFAM…EEIR), 115-136 (PHAD…QRLG), 137-158 (PYAE…NQLT), 159-180 (AHAQ…ASLT), 181-202 (PYAD…GHLT), 203-224 (PYAD…RSLA), 225-246 (PYAQ…FQMK), 247-268 (KNAE…QKLV), 269-286 (PVAE…EELQ), 287-308 (KSLA…RNMG), and 309-330 (PYGE…QKLG). A 13 X 22 AA approximate tandem repeats region spans residues 33–330 (DYFSQLSNNA…QVEELRQKLG (298 aa)).

This sequence belongs to the apolipoprotein A1/A4/E family. In terms of assembly, homodimer. Phosphorylation sites are present in the extracellular medium.

It is found in the secreted. Its function is as follows. May have a role in chylomicrons and VLDL secretion and catabolism. Required for efficient activation of lipoprotein lipase by ApoC-II; potent activator of LCAT. Apoa-IV is a major component of HDL and chylomicrons. The protein is Apolipoprotein A-IV (APOA4) of Mirounga angustirostris (Northern elephant seal).